We begin with the raw amino-acid sequence, 208 residues long: Probable GTP-binding protein EngB (208 aa).

In terms of domain architecture, EngB-type G spans 25 to 199 (TGIEVAFAGR…RQKLDSWYNG (175 aa)). GTP contacts are provided by residues 33–40 (GRSNAGKS), 60–64 (GRTQL), 78–81 (DLPG), 145–148 (TKSD), and 178–180 (FSS). Residues Ser-40 and Thr-62 each coordinate Mg(2+).

It belongs to the TRAFAC class TrmE-Era-EngA-EngB-Septin-like GTPase superfamily. EngB GTPase family. Mg(2+) is required as a cofactor.

Functionally, necessary for normal cell division and for the maintenance of normal septation. The protein is Probable GTP-binding protein EngB of Enterobacter sp. (strain 638).